Reading from the N-terminus, the 3078-residue chain is Probable polyketide synthase 44 (3078 aa).

The Ketosynthase family 3 (KS3) domain maps to 10–435 (DNDVAIIGIG…GSNACLILTE (426 aa)). Active-site for beta-ketoacyl synthase activity residues include Cys175, His320, and His358. The acyl/malonyl transferase stretch occupies residues 627–660 (GILASISIGHSLGEVSSAVCSGMIDLETGCFIIY). Ser637 (for acyl/malonyl transferase activity) is an active-site residue. Residues 952 to 1072 (TNHLGYRNER…GRLSTTKHND (121 aa)) are N-terminal hotdog fold. In terms of domain architecture, PKS/mFAS DH spans 952-1239 (TNHLGYRNER…YTQLTPYKNQ (288 aa)). His984 (proton acceptor; for dehydratase activity) is an active-site residue. The C-terminal hotdog fold stretch occupies residues 1088 to 1239 (NFVTIQKKEL…YTQLTPYKNQ (152 aa)). The Proton donor; for dehydratase activity role is filled by Asp1150. The stretch at 2080-2119 (LENIKTDLSNKNDNNNNNNNNNNDNKESNIKELLDNDDDE) forms a coiled coil. The tract at residues 2087–2108 (LSNKNDNNNNNNNNNNDNKESN) is disordered. Positions 2090–2102 (KNDNNNNNNNNNN) are enriched in low complexity. In terms of domain architecture, Carrier spans 2558 to 2636 (SDDLSIREQI…QLIQSVTDAM (79 aa)). An O-(pantetheine 4'-phosphoryl)serine modification is found at Ser2596. The helical transmembrane segment at 2694 to 2714 (NTVFLTGSSGFIGIYILFYLI) threads the bilayer.

Pantetheine 4'-phosphate is required as a cofactor.

It localises to the membrane. In terms of biological role, probable polyketide synthase. This is Probable polyketide synthase 44 (pks44) from Dictyostelium discoideum (Social amoeba).